The primary structure comprises 309 residues: Homoserine O-succinyltransferase (309 aa).

Cys-142 serves as the catalytic Acyl-thioester intermediate. Substrate is bound by residues Lys-163 and Ser-192. His-235 (proton acceptor) is an active-site residue. The active site involves Glu-237. Arg-249 contributes to the substrate binding site.

Belongs to the MetA family.

The protein resides in the cytoplasm. It catalyses the reaction L-homoserine + succinyl-CoA = O-succinyl-L-homoserine + CoA. It functions in the pathway amino-acid biosynthesis; L-methionine biosynthesis via de novo pathway; O-succinyl-L-homoserine from L-homoserine: step 1/1. Transfers a succinyl group from succinyl-CoA to L-homoserine, forming succinyl-L-homoserine. This is Homoserine O-succinyltransferase from Enterobacter sp. (strain 638).